We begin with the raw amino-acid sequence, 169 residues long: Putative hydrogenase maturation protease MJ0631 (169 aa).

The protein belongs to the peptidase A31 family.

In Methanocaldococcus jannaschii (strain ATCC 43067 / DSM 2661 / JAL-1 / JCM 10045 / NBRC 100440) (Methanococcus jannaschii), this protein is Putative hydrogenase maturation protease MJ0631.